The sequence spans 771 residues: Tetratricopeptide repeat-containing protein trd-1 (771 aa).

6 TPR repeats span residues 389–415 (LEMW…IRRL), 416–449 (IEQK…SDDR), 451–484 (ARAH…QPIQ), 485–518 (LGTW…QPDH), 520–552 (EAWN…NYEH), and 553–586 (PNVW…NKRG).

This sequence belongs to the TTC27 family. In terms of tissue distribution, expressed in the spermatheca.

It localises to the cytoplasm. In terms of biological role, developmental protein required for cell fate determination in both the germline and seam cells of the developing epidermis. Specifically, involved in sex determination and may function in parallel or downstream of other sex determination factors, including tra-2 and fem-3, to promote oogenesis in its role in the regulation of the switch from spermatogenesis to oogenesis in the gonads. Also implicated in the mitosis to meiosis switch in distal tip cells. In Caenorhabditis elegans, this protein is Tetratricopeptide repeat-containing protein trd-1.